Reading from the N-terminus, the 139-residue chain is MAVLYTTLDSKFPSINRKITTRWIKQILIDYNKRAGDITCIFCSNDEILRINNFYLNHDCYTDIITFDYSKGDIISGDLFIALDMIKYNSMKYNVNYFEELYRVIIHGILHLCGFNDKLIKDIKVMREGENRALEKIRS.

3 residues coordinate Zn(2+): His107, His111, and Asp117.

Belongs to the endoribonuclease YbeY family. The cofactor is Zn(2+).

Its subcellular location is the cytoplasm. Single strand-specific metallo-endoribonuclease involved in late-stage 70S ribosome quality control and in maturation of the 3' terminus of the 16S rRNA. The polypeptide is Endoribonuclease YbeY (Azobacteroides pseudotrichonymphae genomovar. CFP2).